Consider the following 207-residue polypeptide: Large ribosomal subunit protein uL4 (207 aa).

Positions 49 to 78 (HAVKNRSAVSGGGRKPWRQKGTGRARQGSI) are disordered.

The protein belongs to the universal ribosomal protein uL4 family. In terms of assembly, part of the 50S ribosomal subunit.

In terms of biological role, one of the primary rRNA binding proteins, this protein initially binds near the 5'-end of the 23S rRNA. It is important during the early stages of 50S assembly. It makes multiple contacts with different domains of the 23S rRNA in the assembled 50S subunit and ribosome. Functionally, forms part of the polypeptide exit tunnel. The polypeptide is Large ribosomal subunit protein uL4 (Streptococcus sanguinis (strain SK36)).